Consider the following 1286-residue polypeptide: DNA-directed RNA polymerase 147 kDa polypeptide (1286 aa).

The protein belongs to the poxviridae DNA-directed RNA polymerase 147 kDa subunit family. In terms of assembly, the DNA-dependent RNA polymerase used for intermediate and late genes expression consists of eight subunits Rpo30/OPG66, Rpo7/OPG90, Rpo22/OPG103, Rpo147/OPG105, Rpo18/OPG119, Rpo19/OPG131, Rpo132/OPG151 and Rpo35/OPG156. The same holoenzyme, with the addition of the transcription-specificity factor OPG109, is used for early gene expression.

It localises to the virion. It carries out the reaction RNA(n) + a ribonucleoside 5'-triphosphate = RNA(n+1) + diphosphate. Its function is as follows. Part of the DNA-dependent RNA polymerase which catalyzes the transcription of viral DNA into RNA using the four ribonucleoside triphosphates as substrates. Responsible for the transcription of early, intermediate and late genes. DNA-dependent RNA polymerase associates with the early transcription factor (ETF), itself composed of OPG118 and OPG133, thereby allowing the early genes transcription. Late transcription, and probably also intermediate transcription, require newly synthesized RNA polymerase. The polypeptide is DNA-directed RNA polymerase 147 kDa polypeptide (OPG105) (Variola virus (isolate Human/India/Ind3/1967) (VARV)).